A 420-amino-acid chain; its full sequence is Gamma-glutamyl phosphate reductase (420 aa).

This sequence belongs to the gamma-glutamyl phosphate reductase family.

It is found in the cytoplasm. The catalysed reaction is L-glutamate 5-semialdehyde + phosphate + NADP(+) = L-glutamyl 5-phosphate + NADPH + H(+). Its pathway is amino-acid biosynthesis; L-proline biosynthesis; L-glutamate 5-semialdehyde from L-glutamate: step 2/2. In terms of biological role, catalyzes the NADPH-dependent reduction of L-glutamate 5-phosphate into L-glutamate 5-semialdehyde and phosphate. The product spontaneously undergoes cyclization to form 1-pyrroline-5-carboxylate. The sequence is that of Gamma-glutamyl phosphate reductase from Pasteurella multocida (strain Pm70).